The following is a 227-amino-acid chain: 2-C-methyl-D-erythritol 4-phosphate cytidylyltransferase (227 aa).

This sequence belongs to the IspD/TarI cytidylyltransferase family. IspD subfamily.

It carries out the reaction 2-C-methyl-D-erythritol 4-phosphate + CTP + H(+) = 4-CDP-2-C-methyl-D-erythritol + diphosphate. Its pathway is isoprenoid biosynthesis; isopentenyl diphosphate biosynthesis via DXP pathway; isopentenyl diphosphate from 1-deoxy-D-xylulose 5-phosphate: step 2/6. Functionally, catalyzes the formation of 4-diphosphocytidyl-2-C-methyl-D-erythritol from CTP and 2-C-methyl-D-erythritol 4-phosphate (MEP). The sequence is that of 2-C-methyl-D-erythritol 4-phosphate cytidylyltransferase from Deinococcus geothermalis (strain DSM 11300 / CIP 105573 / AG-3a).